The primary structure comprises 170 residues: MNQSSFTREELLACSRGEMFGPGNSKLPAPNMLMMDRIIEINEDGGSAGKGFIHAELDINPDLWFFDCHFKGDPVMPGCLGLDAMWQLLGFHLAWSGGPGRGRALGVGEVKFTGQILPEHKKVSYFIDMTRVIKRKLFMGVGNGRVEVDGREIYTAKDLKVGLFTDTSTF.

His69 is a catalytic residue.

It belongs to the thioester dehydratase family. FabA subfamily. Homodimer.

The protein localises to the cytoplasm. The enzyme catalyses a (3R)-hydroxyacyl-[ACP] = a (2E)-enoyl-[ACP] + H2O. The catalysed reaction is (3R)-hydroxydecanoyl-[ACP] = (2E)-decenoyl-[ACP] + H2O. It carries out the reaction (2E)-decenoyl-[ACP] = (3Z)-decenoyl-[ACP]. Its pathway is lipid metabolism; fatty acid biosynthesis. Necessary for the introduction of cis unsaturation into fatty acids. Catalyzes the dehydration of (3R)-3-hydroxydecanoyl-ACP to E-(2)-decenoyl-ACP and then its isomerization to Z-(3)-decenoyl-ACP. Can catalyze the dehydratase reaction for beta-hydroxyacyl-ACPs with saturated chain lengths up to 16:0, being most active on intermediate chain length. In Idiomarina loihiensis (strain ATCC BAA-735 / DSM 15497 / L2-TR), this protein is 3-hydroxydecanoyl-[acyl-carrier-protein] dehydratase.